The chain runs to 138 residues: Large ribosomal subunit protein uL16 (138 aa).

Residues 1 to 21 are compositionally biased toward basic residues; the sequence is MLIPRKVKHRKQHHPSLRGRA. Positions 1–22 are disordered; it reads MLIPRKVKHRKQHHPSLRGRAK.

The protein belongs to the universal ribosomal protein uL16 family. In terms of assembly, part of the 50S ribosomal subunit.

In terms of biological role, binds 23S rRNA and is also seen to make contacts with the A and possibly P site tRNAs. This chain is Large ribosomal subunit protein uL16, found in Thermobifida fusca (strain YX).